Consider the following 602-residue polypeptide: Elongation factor 4 (602 aa).

In terms of domain architecture, tr-type G spans 7 to 189; it reads SKIRNFCIIA…AIVRRVPPPQ (183 aa). GTP contacts are provided by residues 19–24 and 136–139; these read DHGKST and NKVD.

It belongs to the TRAFAC class translation factor GTPase superfamily. Classic translation factor GTPase family. LepA subfamily.

Its subcellular location is the cell inner membrane. It carries out the reaction GTP + H2O = GDP + phosphate + H(+). Functionally, required for accurate and efficient protein synthesis under certain stress conditions. May act as a fidelity factor of the translation reaction, by catalyzing a one-codon backward translocation of tRNAs on improperly translocated ribosomes. Back-translocation proceeds from a post-translocation (POST) complex to a pre-translocation (PRE) complex, thus giving elongation factor G a second chance to translocate the tRNAs correctly. Binds to ribosomes in a GTP-dependent manner. The sequence is that of Elongation factor 4 from Prochlorococcus marinus (strain MIT 9215).